Consider the following 881-residue polypeptide: Ent-kaurene synthase CPS/KS, chloroplastic (881 aa).

The transit peptide at 1 to 41 (MASSTLIQNRSCGVTSSMSSFQIFRGQPLRFPGTRTPAAVQ) directs the protein to the chloroplast. Residues aspartate 417, aspartate 419, aspartate 635, aspartate 639, asparagine 778, aspartate 779, and glutamate 786 each contribute to the Mg(2+) site. The DXDDTA motif motif lies at 417 to 422 (DVDDTA). The short motif at 635–639 (DDYFD) is the DDXXD motif element.

The protein belongs to the terpene synthase family. Mg(2+) serves as cofactor.

It localises to the plastid. Its subcellular location is the chloroplast. The enzyme catalyses (2E,6E,10E)-geranylgeranyl diphosphate = ent-copalyl diphosphate. It carries out the reaction ent-copalyl diphosphate = ent-kaur-16-ene + diphosphate. The catalysed reaction is ent-copalyl diphosphate = ent-beyerene + diphosphate. It catalyses the reaction ent-copalyl diphosphate = ent-sandaracopimara-8(14),15-diene + diphosphate. The enzyme catalyses ent-copalyl diphosphate = ent-isokaurene + diphosphate. It carries out the reaction ent-copalyl diphosphate + H2O = 16alpha-hydroxy-ent-kaurene + diphosphate. Its pathway is secondary metabolite biosynthesis; terpenoid biosynthesis. In terms of biological role, bifunctional copalyl diphosphate/kaurene synthase involved in the biosynthesis of labdane-related diterpenoids (LRDs) natural products such as ent-beyerene, an antimicrobial compound. Supports the conversion of geranylgeranyl diphosphate (GGPP) to ent-copalyl diphosphate (ent-CDP). Also catalyzes the subsequent cyclization of ent-CDP into many diterpenes, including ent-kaur-16-ene as the major product, and ent-beyerene, ent-sandaracopimaradiene, ent-kaur-15-ene (ent-isokaurene) and 16-hydroxy-ent-kaurene (ent-16-alpha-hydroxy-kaurene) as minor products. This is Ent-kaurene synthase CPS/KS, chloroplastic from Physcomitrium patens (Spreading-leaved earth moss).